The sequence spans 25 residues: Caerin-2.4 (25 aa).

In terms of tissue distribution, expressed by the skin parotoid and/or rostral glands.

The protein localises to the secreted. Functionally, antibacterial peptide, that adopts an alpha helical conformation which can disrupt bacterial membranes. Each caerin displays a different antimicrobial specificity. The sequence is that of Caerin-2.4 from Ranoidea caerulea (Green tree frog).